Reading from the N-terminus, the 1755-residue chain is Deleted in lung and esophageal cancer protein 1 (1755 aa).

Residues 1-12 (METRSSKTRRSL) show a composition bias toward basic residues. Disordered regions lie at residues 1-39 (METR…PSQP), 1339-1360 (PGPS…GSSS), and 1529-1553 (SQDG…EETA). Residues 30 to 39 (PAGSSSPSQP) show a composition bias toward low complexity.

In terms of assembly, interacts with alpha- and beta-tubulin. Interacts with BBS2, BBS4, BBS5, MKKS, TCP1, CCT2, CCT3, CCT4, CCT5 and CCT7. Expressed in all tissues examined. Expression is highest in prostate and testis.

Its subcellular location is the cytoplasm. Essential for spermatogenesis and male fertility. May play an important role in sperm head and tail formation. May act as a tumor suppressor by inhibiting cell proliferation. The protein is Deleted in lung and esophageal cancer protein 1 of Homo sapiens (Human).